Consider the following 277-residue polypeptide: Purine nucleoside phosphorylase 2 (277 aa).

Phosphate is bound by residues His-65, Arg-85–His-87, and Ala-117. Glu-197 lines the a purine D-ribonucleoside pocket. Ser-216 serves as a coordination point for phosphate. Asn-239 is an a purine D-ribonucleoside binding site.

The protein belongs to the PNP/MTAP phosphorylase family. In terms of assembly, hexamer. Dimer of trimers.

The enzyme catalyses a purine D-ribonucleoside + phosphate = a purine nucleobase + alpha-D-ribose 1-phosphate. It participates in purine metabolism; xanthosine degradation. It functions in the pathway purine metabolism; purine nucleoside salvage. Rapidly inactivated by p-chloromercuriphenylsulfonic acid (p-CMB). Dithiothreitol incubation restores the activity. Its function is as follows. The purine nucleoside phosphorylases catalyze the phosphorolytic breakdown of the N-glycosidic bond in the beta-(deoxy)ribonucleoside molecules, with the formation of the corresponding free purine bases and pentose-1-phosphate. This protein can degrade all purine nucleosides including xanthosine, inosine and guanosine, but cannot cleave adenosine, deoxyadenosine or hypoxanthine arabinoside. Has a preference for the neutral over the monoanionic form of xanthosine. This is Purine nucleoside phosphorylase 2 (xapA) from Escherichia coli (strain K12).